The following is a 370-amino-acid chain: Aminomethyltransferase (370 aa).

Belongs to the GcvT family. The glycine cleavage system is composed of four proteins: P, T, L and H.

It carries out the reaction N(6)-[(R)-S(8)-aminomethyldihydrolipoyl]-L-lysyl-[protein] + (6S)-5,6,7,8-tetrahydrofolate = N(6)-[(R)-dihydrolipoyl]-L-lysyl-[protein] + (6R)-5,10-methylene-5,6,7,8-tetrahydrofolate + NH4(+). In terms of biological role, the glycine cleavage system catalyzes the degradation of glycine. This Prochlorococcus marinus (strain MIT 9215) protein is Aminomethyltransferase.